Here is a 248-residue protein sequence, read N- to C-terminus: Oligo(A)/oligo(T)-binding protein (248 aa).

The DNA-binding element occupies 1-36; it reads MAKTLAQGRKPGSGRKPGKGKTLREGRKPGSGRRRR. 2 disordered regions span residues 1–127 and 219–248; these read MAKT…LQQQ and TAAS…NATI. Tandem repeats lie at residues 8–12, 14–18, and 26–30. The interval 8 to 30 is 3 X 5 AA repeats of G-R-K-P-G; it reads GRKPGSGRKPGKGKTLREGRKPG. Over residues 12-21 the composition is skewed to basic residues; it reads GSGRKPGKGK. Residues 37 to 71 are compositionally biased toward basic and acidic residues; sequence QDTGGKETDGSQQDQESRLISSRDMEAVDALRELT. Composition is skewed to low complexity over residues 72-100 and 111-127; these read HSPS…LPPS and QQQQ…LQQQ.

As to quaternary structure, binds as a dimer or higher oligomer.

Its function is as follows. DNA-binding protein that recognizes oligo(A).oligo(T) tracts (A.T DNA). Can bind to any 11 bp sequence in which 10 bases conform to an uninterrupted oligo(A).oligo(T) tract. The sequence is that of Oligo(A)/oligo(T)-binding protein (DAT1) from Saccharomyces cerevisiae (strain ATCC 204508 / S288c) (Baker's yeast).